Reading from the N-terminus, the 434-residue chain is Pancreatic lipase-related protein 2 (434 aa).

Cys-4 and Cys-10 are joined by a disulfide. A required for galactolipase activity region spans residues 76 to 88 (IHGFTDSGENSWL). Cys-92 and Cys-103 form a disulfide bridge. Ser-154 functions as the Nucleophile in the catalytic mechanism. Asp-178 serves as the catalytic Charge relay system. Ca(2+)-binding residues include Glu-189, Arg-192, Asp-194, and Asp-197. Cysteines 239 and 245 form a disulfide. A required for galactolipase activity region spans residues 240–244 (KTGIS). Catalysis depends on His-247, which acts as the Charge relay system. 2 disulfides stabilise this stretch: Cys-269/Cys-280 and Cys-283/Cys-288. N-linked (GlcNAc...) asparagine glycosylation occurs at Asn-318. Residues 322-434 (WRYKVTVTLS…ENVEQTLSPC (113 aa)) form the PLAT domain. The cysteines at positions 418 and 434 are disulfide-linked.

It belongs to the AB hydrolase superfamily. Lipase family. In terms of tissue distribution, pancreas.

Its subcellular location is the secreted. The protein resides in the zymogen granule membrane. It is found in the cell projection. It localises to the neuron projection. The catalysed reaction is a triacylglycerol + H2O = a diacylglycerol + a fatty acid + H(+). It catalyses the reaction a 1,2-diacyl-3-O-(beta-D-galactosyl)-sn-glycerol + 2 H2O = 3-beta-D-galactosyl-sn-glycerol + 2 a fatty acid + 2 H(+). It carries out the reaction 1,2,3-tri-(9Z-octadecenoyl)-glycerol + H2O = di-(9Z)-octadecenoylglycerol + (9Z)-octadecenoate + H(+). The enzyme catalyses di-(9Z)-octadecenoylglycerol + H2O = (9Z-octadecenoyl)-glycerol + (9Z)-octadecenoate + H(+). The catalysed reaction is (9Z-octadecenoyl)-glycerol + H2O = glycerol + (9Z)-octadecenoate + H(+). It catalyses the reaction 1-(9Z-octadecenoyl)-glycerol + H2O = glycerol + (9Z)-octadecenoate + H(+). It carries out the reaction 1,2,3-tripropanoylglycerol + H2O = dipropanoylglycerol + propanoate + H(+). The enzyme catalyses 1,2,3-tributanoylglycerol + H2O = dibutanoylglycerol + butanoate + H(+). The catalysed reaction is 1,2,3-trioctanoylglycerol + H2O = dioctanoylglycerol + octanoate + H(+). It catalyses the reaction 1,2-didecanoylglycerol + H2O = decanoylglycerol + decanoate + H(+). It carries out the reaction long chain 1,2-diacyl-3-O-beta-D-galactosyl-sn-glycerol + H2O = long chain acyl-3-O-beta-D-galactosyl-sn-glycerol + a fatty acid + H(+). The enzyme catalyses 1,2-dioctanoyl-3-O-beta-D-galactosyl-sn-glycerol + H2O = octanoyl-3-(beta-D-galactosyl)-sn-glycerol + octanoate + H(+). The catalysed reaction is 1,2-didodecanoyl-3-beta-D-galactosyl-sn-glycerol + H2O = dodecanoyl-3-beta-D-galactosyl-sn-glycerol + dodecanoate + H(+). It catalyses the reaction 1-beta-D-galactosyl-2,3-didodecanoyl-sn-glycerol + H2O = 1-beta-D-galactosyl-dodecanoyl-sn-glycerol + dodecanoate + H(+). It carries out the reaction a 1,2-diacyl-3-O-[alpha-D-galactosyl-(1-&gt;6)-beta-D-galactosyl]-sn-glycerol + H2O = acyl-3-O-[alpha-D-galactosyl-(1-&gt;6)-beta-D-galactosyl]-sn-glycerol + a fatty acid + H(+). The enzyme catalyses long chain 1,2-diacyl-3-O-[alpha-D-galactosyl-(1-&gt;6)-beta-D-galactosyl]-sn-glycerol + H2O = long chain acyl-3-O-[alpha-D-galactosyl-(1-&gt;6)-beta-D-galactosyl]-sn-glycerol + a fatty acid + H(+). The catalysed reaction is 1,2-dioctanoyl-3-O-[alpha-D-galactosyl-(1-&gt;6)-beta-D-galactosyl]-sn-glycerol + H2O = octanoyl-3-O-[alpha-D-galactosyl-(1-&gt;6)-beta-D-galactosyl]-sn-glycerol + octanoate + H(+). It catalyses the reaction 1,2-didodecanoyl-3-O-[alpha-D-galactosyl-(1-&gt;6)-beta-D-galactosyl]-sn-glycerol + H2O = dodecanoyl-3-O-[alpha-D-galactosyl-(1-&gt;6)-beta-D-galactosyl]-sn-glycerol + dodecanoate + H(+). It carries out the reaction a 1,2-diacyl-sn-glycero-3-phosphocholine + H2O = a monoacyl-sn-glycero-3-phosphocholine + a fatty acid + H(+). Its pathway is glycerolipid metabolism; triacylglycerol degradation. It participates in glycolipid metabolism. With respect to regulation, CLPS stimulates triacylglycerol lipase activity. Not inhibited by bile salts. Lipase that primarily hydrolyzes triglycerides and galactosylglycerides. In neonates, may play a major role in pancreatic digestion of dietary fats such as milk fat globules enriched in long-chain triglycerides. Hydrolyzes short-, medium- and long-chain fatty acyls in triglycerides without apparent positional specificity. Can completely deacylate triacylglycerols. When the liver matures and bile salt synthesis increases, likely functions mainly as a galactolipase and monoacylglycerol lipase. Hydrolyzes monogalactosyldiglycerols (MGDG) and digalactosyldiacylglycerols (DGDG) present in a plant-based diet, releasing long-chain polyunsaturated fatty acids. Hydrolyzes medium- and long-chain fatty acyls in galactolipids. May act together with LIPF to hydrolyze partially digested triglycerides. Hydrolyzes long-chain monoglycerides with high efficiency. In cytotoxic T cells, contributes to perforin-dependent cell lysis, but is unlikely to mediate direct cytotoxicity. Also has low phospholipase activity. In neurons, required for the localization of the phospholipid 1-oleoyl-2-palmitoyl-PC (OPPC) to neurite tips through acyl chain remodeling of membrane phospholipids. The resulting OPPC-rich lipid membrane domain recruits the t-SNARE protein STX4 by selectively interacting with the STX4 transmembrane domain and this promotes surface expression of the dopamine transporter SLC6A3/DAT at neurite tips by facilitating fusion of SLC6A3-containing transport vesicles with the plasma membrane. The protein is Pancreatic lipase-related protein 2 of Cavia porcellus (Guinea pig).